The chain runs to 256 residues: Pimeloyl-[acyl-carrier protein] methyl ester esterase (256 aa).

Positions 15 to 242 constitute an AB hydrolase-1 domain; the sequence is HLVLLHGWGL…AAHAPFISHP (228 aa). Substrate is bound by residues tryptophan 22, 82-83, and 143-147; these read SL and FLALQ. Catalysis depends on serine 82, which acts as the Nucleophile. Active-site residues include aspartate 207 and histidine 235. Histidine 235 lines the substrate pocket.

The protein belongs to the AB hydrolase superfamily. Carboxylesterase BioH family. Monomer.

Its subcellular location is the cytoplasm. The catalysed reaction is 6-carboxyhexanoyl-[ACP] methyl ester + H2O = 6-carboxyhexanoyl-[ACP] + methanol + H(+). It functions in the pathway cofactor biosynthesis; biotin biosynthesis. In terms of biological role, the physiological role of BioH is to remove the methyl group introduced by BioC when the pimeloyl moiety is complete. It allows to synthesize pimeloyl-ACP via the fatty acid synthetic pathway through the hydrolysis of the ester bonds of pimeloyl-ACP esters. The protein is Pimeloyl-[acyl-carrier protein] methyl ester esterase of Escherichia coli (strain K12 / MC4100 / BW2952).